Here is a 144-residue protein sequence, read N- to C-terminus: MKAVLTRVSSASVSVDDEIVGAIDCPDTGGILALVGVGAADSDDAWETMVRKIAELRILDGEQSVSDVNAPVLLVSQFTLHGRTAKGRRPSWSDAAPGEVAEPVIEKIAQGLRERGITVEQGRFGAMMKVTSVNEGPFTVLVEC.

The short motif at 136–137 (GP) is the Gly-cisPro motif, important for rejection of L-amino acids element.

This sequence belongs to the DTD family. In terms of assembly, homodimer.

It is found in the cytoplasm. The enzyme catalyses glycyl-tRNA(Ala) + H2O = tRNA(Ala) + glycine + H(+). The catalysed reaction is a D-aminoacyl-tRNA + H2O = a tRNA + a D-alpha-amino acid + H(+). In terms of biological role, an aminoacyl-tRNA editing enzyme that deacylates mischarged D-aminoacyl-tRNAs. Also deacylates mischarged glycyl-tRNA(Ala), protecting cells against glycine mischarging by AlaRS. Acts via tRNA-based rather than protein-based catalysis; rejects L-amino acids rather than detecting D-amino acids in the active site. By recycling D-aminoacyl-tRNA to D-amino acids and free tRNA molecules, this enzyme counteracts the toxicity associated with the formation of D-aminoacyl-tRNA entities in vivo and helps enforce protein L-homochirality. This Corynebacterium glutamicum (strain R) protein is D-aminoacyl-tRNA deacylase.